A 202-amino-acid polypeptide reads, in one-letter code: N-(5'-phosphoribosyl)anthranilate isomerase (202 aa).

It belongs to the TrpF family.

It carries out the reaction N-(5-phospho-beta-D-ribosyl)anthranilate = 1-(2-carboxyphenylamino)-1-deoxy-D-ribulose 5-phosphate. Its pathway is amino-acid biosynthesis; L-tryptophan biosynthesis; L-tryptophan from chorismate: step 3/5. The chain is N-(5'-phosphoribosyl)anthranilate isomerase from Listeria welshimeri serovar 6b (strain ATCC 35897 / DSM 20650 / CCUG 15529 / CIP 8149 / NCTC 11857 / SLCC 5334 / V8).